Reading from the N-terminus, the 597-residue chain is UvrABC system protein C (597 aa).

Positions K14 to L91 constitute a GIY-YIG domain.

Belongs to the UvrC family. Interacts with UvrB in an incision complex.

It is found in the cytoplasm. In terms of biological role, the UvrABC repair system catalyzes the recognition and processing of DNA lesions. UvrC both incises the 5' and 3' sides of the lesion. The N-terminal half is responsible for the 3' incision and the C-terminal half is responsible for the 5' incision. The polypeptide is UvrABC system protein C (Mycoplasma genitalium (strain ATCC 33530 / DSM 19775 / NCTC 10195 / G37) (Mycoplasmoides genitalium)).